The sequence spans 356 residues: Probable methyltransferase-like protein 15 homolog (356 aa).

Residues 55-57, D74, F103, D126, and Q133 each bind S-adenosyl-L-methionine; that span reads GGH.

It belongs to the methyltransferase superfamily. RsmH family.

Its function is as follows. Probable S-adenosyl-L-methionine-dependent methyltransferase. In Drosophila melanogaster (Fruit fly), this protein is Probable methyltransferase-like protein 15 homolog.